Reading from the N-terminus, the 293-residue chain is Undecaprenyl-diphosphatase (293 aa).

Transmembrane regions (helical) follow at residues 3-23 (IALA…EFLP), 43-63 (KGKI…CWEF), 85-105 (LNVI…GKAI), 109-129 (LFNP…ILWA), 203-223 (VATE…TVYE), 238-258 (IFGI…RWLL), and 269-289 (FAWY…THLI).

Belongs to the UppP family.

It is found in the cell inner membrane. It catalyses the reaction di-trans,octa-cis-undecaprenyl diphosphate + H2O = di-trans,octa-cis-undecaprenyl phosphate + phosphate + H(+). Functionally, catalyzes the dephosphorylation of undecaprenyl diphosphate (UPP). Confers resistance to bacitracin. This chain is Undecaprenyl-diphosphatase, found in Ralstonia nicotianae (strain ATCC BAA-1114 / GMI1000) (Ralstonia solanacearum).